Consider the following 244-residue polypeptide: Serine-rich single-pass membrane protein 1 (244 aa).

A helical transmembrane segment spans residues 35-55; sequence CGTIGSFLLWYFVIVFVLMFF. Disordered stretches follow at residues 65 to 114, 126 to 191, and 210 to 244; these read DKKD…PVTN, QRRA…LGSY, and LAHH…FSKF. Basic and acidic residues predominate over residues 80 to 94; sequence ASKETSCKRQSKDSA. Polar residues-rich tracts occupy residues 96–114 and 132–142; these read DPSQ…PVTN and QSQFNEVNQNQ. Over residues 161 to 176 the composition is skewed to basic and acidic residues; that stretch reads SWKESESEHHPSPDSI.

It is found in the membrane. This chain is Serine-rich single-pass membrane protein 1 (SSMEM1), found in Homo sapiens (Human).